The sequence spans 424 residues: UPF0597 protein Shewmr7_2876 (424 aa).

The protein belongs to the UPF0597 family.

In Shewanella sp. (strain MR-7), this protein is UPF0597 protein Shewmr7_2876.